A 142-amino-acid chain; its full sequence is Large ribosomal subunit protein uL13 (142 aa).

This sequence belongs to the universal ribosomal protein uL13 family. Part of the 50S ribosomal subunit.

In terms of biological role, this protein is one of the early assembly proteins of the 50S ribosomal subunit, although it is not seen to bind rRNA by itself. It is important during the early stages of 50S assembly. This Pseudoalteromonas atlantica (strain T6c / ATCC BAA-1087) protein is Large ribosomal subunit protein uL13.